The sequence spans 375 residues: Glutamate 5-kinase (375 aa).

Lys17 serves as a coordination point for ATP. 3 residues coordinate substrate: Ser57, Asp144, and Asn156. 176-177 contributes to the ATP binding site; that stretch reads TD. Positions 283–361 constitute a PUA domain; that stretch reads KGELILDTGA…DEIEGILGYV (79 aa).

Belongs to the glutamate 5-kinase family.

It is found in the cytoplasm. The enzyme catalyses L-glutamate + ATP = L-glutamyl 5-phosphate + ADP. Its pathway is amino-acid biosynthesis; L-proline biosynthesis; L-glutamate 5-semialdehyde from L-glutamate: step 1/2. Functionally, catalyzes the transfer of a phosphate group to glutamate to form L-glutamate 5-phosphate. The polypeptide is Glutamate 5-kinase (Thioalkalivibrio sulfidiphilus (strain HL-EbGR7)).